We begin with the raw amino-acid sequence, 399 residues long: Elongation factor Tu (399 aa).

The region spanning 10 to 204 (KPHVNIGTIG…AVDASIPEPE (195 aa)) is the tr-type G domain. The segment at 19–26 (GHVDHGKT) is G1. 19–26 (GHVDHGKT) lines the GTP pocket. Threonine 26 serves as a coordination point for Mg(2+). Positions 60–64 (GITIN) are G2. Positions 81–84 (DCPG) are G3. GTP contacts are provided by residues 81-85 (DCPGH) and 136-139 (NKCD). Residues 136 to 139 (NKCD) form a G4 region. The segment at 174 to 176 (SGL) is G5.

This sequence belongs to the TRAFAC class translation factor GTPase superfamily. Classic translation factor GTPase family. EF-Tu/EF-1A subfamily. Monomer.

It is found in the cytoplasm. It catalyses the reaction GTP + H2O = GDP + phosphate + H(+). In terms of biological role, GTP hydrolase that promotes the GTP-dependent binding of aminoacyl-tRNA to the A-site of ribosomes during protein biosynthesis. This is Elongation factor Tu from Prochlorococcus marinus (strain MIT 9312).